The sequence spans 24 residues: Waglerin-4 (24 aa).

An intrachain disulfide couples Cys-11 to Cys-15.

It belongs to the waglerin family. As to quaternary structure, monomer. Expressed by the venom gland.

The protein resides in the secreted. Waglerin-2 selectively blocks the epsilon subunit of muscle nicotinic acetylcholine receptor (nAChR). Also has effects on rodent ionotropic GABA(A) receptors (GABR), since it potentiates I(GABA) in some neurons and depresses I(GABA) in others. In mice, it elicits tachypnea, ocular proptosis, rapid collapse and spasms, whereas no toxic effects on respiration and blood pressure are observed in rats. Functionally, waglerin-4 selectively blocks the epsilon subunit of muscle nicotinic acetylcholine receptor. It elicits tachypnea, ocular proptosis, rapid collapse and spasms in mice. It causes death by respiratory failure. The protein is Waglerin-4 of Tropidolaemus wagleri (Wagler's pit viper).